A 359-amino-acid chain; its full sequence is NF-kappa-B inhibitor beta (359 aa).

Ser-19 and Ser-23 each carry phosphoserine; by RPS6KA1. 3 ANK repeats span residues 57 to 86 (DGDTALHLAVIHQHEPFLDFLLGFSAGTEY), 93 to 122 (LGQTALHLAAILGEASTVEKLYAAGAGVLV), and 126 to 155 (GGHTALHLACRVRAHTCACVLLQPRPSHPR). Residues 153–194 (HPRDASDTYLTQSQDCTPDTSHAPAAVDSQPNPENEEEPRDE) form a disordered region. The span at 160-172 (TYLTQSQDCTPDT) shows a compositional bias: polar residues. ANK repeat units follow at residues 206–235 (DGHTPLHVAVIHKDAEMVRLLRDAGADLNK), 240–269 (CGRTPLHLAVEAQAASVLELLLKAGADPTA), and 273–302 (GGRTPLGSALLRPNPILARLLRAHGAPEPE). Residues 298–359 (APEPEDEDDK…KPLPDDPNPA (62 aa)) form a disordered region. Phosphoserine occurs at positions 313 and 318. A compositionally biased stretch (acidic residues) spans 318–331 (SDSDNRDEGDEYDD). Over residues 344–359 (PPSPASKPLPDDPNPA) the composition is skewed to pro residues.

The protein belongs to the NF-kappa-B inhibitor family. In terms of assembly, interacts with THRB (via ligand-binding domain). Interacts with RELA and REL. Interacts with COMMD1. Interacts with inhibitor kappa B-interacting Ras-like NKIRAS1 and NKIRAS2. Phosphorylated by RPS6KA1; followed by degradation. Interaction with NKIRAS1 and NKIRAS2 probably prevents phosphorylation. Highly expressed in testis followed by spleen.

The protein localises to the cytoplasm. Its subcellular location is the nucleus. Inhibits NF-kappa-B by complexing with and trapping it in the cytoplasm. However, the unphosphorylated form resynthesized after cell stimulation is able to bind NF-kappa-B allowing its transport to the nucleus and protecting it to further NFKBIA-dependent inactivation. Association with inhibitor kappa B-interacting NKIRAS1 and NKIRAS2 prevent its phosphorylation rendering it more resistant to degradation, explaining its slower degradation. This Mus musculus (Mouse) protein is NF-kappa-B inhibitor beta (Nfkbib).